Here is a 374-residue protein sequence, read N- to C-terminus: Ribosomal RNA large subunit methyltransferase G (374 aa).

Belongs to the methyltransferase superfamily. RlmG family.

The protein resides in the cytoplasm. The enzyme catalyses guanosine(1835) in 23S rRNA + S-adenosyl-L-methionine = N(2)-methylguanosine(1835) in 23S rRNA + S-adenosyl-L-homocysteine + H(+). Functionally, specifically methylates the guanine in position 1835 (m2G1835) of 23S rRNA. This Pseudomonas entomophila (strain L48) protein is Ribosomal RNA large subunit methyltransferase G.